The primary structure comprises 1241 residues: eIF-2-alpha kinase GCN2 (1241 aa).

A compositionally biased stretch (basic residues) spans Met1–Ser15. Positions Met1–Glu33 are disordered. An RWD domain is found at Glu37–Ile148. A disordered region spans residues Pro253–Leu321. 2 stretches are compositionally biased toward low complexity: residues Asp267–Ser276 and Asn307–Leu321. The region spanning Phe425–Pro731 is the Protein kinase domain. ATP is bound by residues Leu431–Val439 and Lys454. Catalysis depends on Asp586, which acts as the Proton acceptor. Residues Ile819–Arg1219 are histidyl-tRNA synthetase-like.

The protein belongs to the protein kinase superfamily. Ser/Thr protein kinase family. GCN2 subfamily. As to quaternary structure, homodimer; homodimerization is important for kinase activation by uncharged tRNAs. In terms of tissue distribution, expressed in roots, leaves, stems, buds, flowers, siliques and seedlings.

The protein localises to the cytoplasm. The catalysed reaction is L-seryl-[protein] + ATP = O-phospho-L-seryl-[protein] + ADP + H(+). The enzyme catalyses L-threonyl-[protein] + ATP = O-phospho-L-threonyl-[protein] + ADP + H(+). The kinase activity is stimulated upon binding to uncharged tRNAs. Its function is as follows. Metabolic-stress sensing protein kinase that phosphorylates the alpha subunit of eukaryotic translation initiation factor 2 eIF-2-alpha in response to low amino acid availability. Plays a role as an activator of the general amino acid control pathway required for adapatation to amino acid starvation. Converts phosphorylated eIF-2-alpha either to a competitive inhibitor of translation initiation, leading to a global protein synthesis repression, and thus to a reduced overall utilization of amino acids, or to a translational initiation activation of specific mRNAs, and hence allowing reprogramming of amino acid biosynthetic gene expression to alleviate nutrient depletion. Binds uncharged tRNAs. The sequence is that of eIF-2-alpha kinase GCN2 from Arabidopsis thaliana (Mouse-ear cress).